Consider the following 238-residue polypeptide: Chromosome partition protein MukE (238 aa).

Belongs to the MukE family. As to quaternary structure, interacts, and probably forms a ternary complex, with MukF and MukB. The complex formation is stimulated by calcium or magnesium.

Its subcellular location is the cytoplasm. It is found in the nucleoid. Involved in chromosome condensation, segregation and cell cycle progression. May participate in facilitating chromosome segregation by condensation DNA from both sides of a centrally located replisome during cell division. Probably acts via its interaction with MukB and MukF. This chain is Chromosome partition protein MukE, found in Haemophilus ducreyi (strain 35000HP / ATCC 700724).